The following is a 400-amino-acid chain: MGTELFNQAKPILEKIEQHGFEAYFVGGSVRDYLMNRHIHDIDITTSATPDEIESIFEKTIPIGREHGTINVVYQGTNYEVTTFRAEAEYVDHRRPSEVYFVRDLKEDLQRRDFTINAIAMDKNFNIYDYFEGDVALNQHIIKTVGDAKERFKEDALRILRGLRFQSQLNFTIEGDTFEAMKHQIADVEHLSIERIVVELKKLIKGQNVSQSYLNLIDLNFFNYVPFFRSLDMKQTKVNSPISFELWIAILLTVEQTNTSLSDLKISNNEKTKINQYHKIMIEMPQVSSKEQLKLFVYDYGMNNIIDIIAINSILEDNNIKIASPLIFNLQSIKEIDQHLPIRSRRELNINGGDILRITSKKSGPWLKEVLRQIEIDVLTNKVPNLKDELLKWVKENVKI.

Gly28 and Arg31 together coordinate ATP. Residues Gly28 and Arg31 each coordinate CTP. Residues Asp41 and Asp43 each coordinate Mg(2+). ATP-binding residues include Arg112, Asp155, Arg158, Arg161, and Arg164. Residues Arg112, Asp155, Arg158, Arg161, and Arg164 each coordinate CTP.

It belongs to the tRNA nucleotidyltransferase/poly(A) polymerase family. Bacterial CCA-adding enzyme type 3 subfamily. In terms of assembly, homodimer. Requires Mg(2+) as cofactor.

It catalyses the reaction a tRNA precursor + 2 CTP + ATP = a tRNA with a 3' CCA end + 3 diphosphate. The catalysed reaction is a tRNA with a 3' CCA end + 2 CTP + ATP = a tRNA with a 3' CCACCA end + 3 diphosphate. Catalyzes the addition and repair of the essential 3'-terminal CCA sequence in tRNAs without using a nucleic acid template. Adds these three nucleotides in the order of C, C, and A to the tRNA nucleotide-73, using CTP and ATP as substrates and producing inorganic pyrophosphate. tRNA 3'-terminal CCA addition is required both for tRNA processing and repair. Also involved in tRNA surveillance by mediating tandem CCA addition to generate a CCACCA at the 3' terminus of unstable tRNAs. While stable tRNAs receive only 3'-terminal CCA, unstable tRNAs are marked with CCACCA and rapidly degraded. In Staphylococcus haemolyticus (strain JCSC1435), this protein is CCA-adding enzyme.